Consider the following 320-residue polypeptide: Meso-diaminopimelate D-dehydrogenase (320 aa).

NADP(+) is bound by residues 11 to 14 (YGNL), 35 to 37 (SRR), 65 to 68 (CMGS), 88 to 90 (TYD), and 117 to 121 (TGWDP). Substrate-binding positions include aspartate 90, aspartate 120, tryptophan 144, 150–151 (QG), threonine 169, arginine 195, histidine 244, and asparagine 270.

In terms of assembly, homodimer.

It carries out the reaction meso-2,6-diaminopimelate + NADP(+) + H2O = (S)-2-amino-6-oxoheptanedioate + NH4(+) + NADPH + H(+). It functions in the pathway amino-acid biosynthesis; L-lysine biosynthesis via DAP pathway; DL-2,6-diaminopimelate from (S)-tetrahydrodipicolinate: step 1/1. L,L-2,6-diaminopimelate and D,D-2,6-diaminopimelate competitively inhibit the oxidative deamination of meso-2,6-diaminopimelate. The enzyme is also inhibited by L-cysteine, and by p-chloromercuribenzoate, iodoacetic acid and HgCl(2) in vitro. Its function is as follows. Catalyzes the reversible NADPH-dependent reductive amination of L-2-amino-6-oxopimelate, the acyclic form of L-tetrahydrodipicolinate, to generate the meso compound, D,L-2,6-diaminopimelate. Probably plays a role in lysine biosynthesis. Exhibits a high substrate specificity for meso-2,6-diaminopimelate, since L,L-2,6-diaminopimelate, D,D-2,6-diaminopimelate, L-glutamate, L-alanine, L-leucine, L-valine, L-aspartate, L-threonine, L-homoserine, L-methionine, L-lysine, L-serine, L-phenylalanine, L-tyrosine, L-tryptophan, L-ornithine, L-histidine, L-arginine, D-glutamate, and D-alanine are not substrates for the oxidative deamination reaction. Can use NAD(+) only poorly since the activity observed in the presence of NAD(+) is about 3% of that with NADP(+). The protein is Meso-diaminopimelate D-dehydrogenase (ddh) of Corynebacterium glutamicum (strain ATCC 13032 / DSM 20300 / JCM 1318 / BCRC 11384 / CCUG 27702 / LMG 3730 / NBRC 12168 / NCIMB 10025 / NRRL B-2784 / 534).